Reading from the N-terminus, the 75-residue chain is Metallothionein-like protein 1 (75 aa).

Belongs to the metallothionein superfamily. Type 15 family.

In terms of biological role, metallothioneins have a high content of cysteine residues that bind various heavy metals. The sequence is that of Metallothionein-like protein 1 (MTA) from Pisum sativum (Garden pea).